A 296-amino-acid chain; its full sequence is Polyamine aminopropyltransferase (296 aa).

The 234-residue stretch at 5–238 (ELWYETLHAN…GIMTFAWATQ (234 aa)) folds into the PABS domain. Position 33 (Gln-33) interacts with S-methyl-5'-thioadenosine. Residues His-64 and Asp-88 each contribute to the spermidine site. Residues Glu-108 and 140-141 (DG) each bind S-methyl-5'-thioadenosine. Asp-158 (proton acceptor) is an active-site residue. 158–161 (DCTD) is a binding site for spermidine. Position 165 (Pro-165) interacts with S-methyl-5'-thioadenosine.

The protein belongs to the spermidine/spermine synthase family. As to quaternary structure, homodimer or homotetramer.

It localises to the cytoplasm. The enzyme catalyses S-adenosyl 3-(methylsulfanyl)propylamine + putrescine = S-methyl-5'-thioadenosine + spermidine + H(+). It functions in the pathway amine and polyamine biosynthesis; spermidine biosynthesis; spermidine from putrescine: step 1/1. In terms of biological role, catalyzes the irreversible transfer of a propylamine group from the amino donor S-adenosylmethioninamine (decarboxy-AdoMet) to putrescine (1,4-diaminobutane) to yield spermidine. This Yersinia pseudotuberculosis serotype O:1b (strain IP 31758) protein is Polyamine aminopropyltransferase.